Reading from the N-terminus, the 160-residue chain is MTTFEGRFTDTADLRIAVVVARFNDLVTSKLLSGCLDCLSRHGIDTAETSSQLDVAWVPGSFELPIVAQNLAQSGRYQVVITLGAVIRGDTPHFDVVVAEASKGIATVARESGVPVIFGVLTTDTMQQALERAGIKSNLGWSYGLQALEMGSLMAALAQS.

5-amino-6-(D-ribitylamino)uracil-binding positions include F23, S61–E63, and A85–I87. Residue D90–T91 participates in (2S)-2-hydroxy-3-oxobutyl phosphate binding. H93 acts as the Proton donor in catalysis. F118 serves as a coordination point for 5-amino-6-(D-ribitylamino)uracil. R132 contributes to the (2S)-2-hydroxy-3-oxobutyl phosphate binding site.

This sequence belongs to the DMRL synthase family.

It carries out the reaction (2S)-2-hydroxy-3-oxobutyl phosphate + 5-amino-6-(D-ribitylamino)uracil = 6,7-dimethyl-8-(1-D-ribityl)lumazine + phosphate + 2 H2O + H(+). It functions in the pathway cofactor biosynthesis; riboflavin biosynthesis; riboflavin from 2-hydroxy-3-oxobutyl phosphate and 5-amino-6-(D-ribitylamino)uracil: step 1/2. Functionally, catalyzes the formation of 6,7-dimethyl-8-ribityllumazine by condensation of 5-amino-6-(D-ribitylamino)uracil with 3,4-dihydroxy-2-butanone 4-phosphate. This is the penultimate step in the biosynthesis of riboflavin. This Parasynechococcus marenigrum (strain WH8102) protein is 6,7-dimethyl-8-ribityllumazine synthase.